The chain runs to 178 residues: Large ribosomal subunit protein uL6 (178 aa).

The protein belongs to the universal ribosomal protein uL6 family. Part of the 50S ribosomal subunit.

Functionally, this protein binds to the 23S rRNA, and is important in its secondary structure. It is located near the subunit interface in the base of the L7/L12 stalk, and near the tRNA binding site of the peptidyltransferase center. This Corynebacterium jeikeium (strain K411) protein is Large ribosomal subunit protein uL6.